The primary structure comprises 345 residues: L-threonine 3-dehydrogenase (345 aa).

Residue C39 participates in Zn(2+) binding. Residues T41 and H44 each act as charge relay system in the active site. Residues H64, E65, C94, C97, C100, and C108 each coordinate Zn(2+). Residues I176, D196, R201, 263 to 265 (LGI), and 287 to 288 (VY) each bind NAD(+).

Belongs to the zinc-containing alcohol dehydrogenase family. As to quaternary structure, homotetramer. The cofactor is Zn(2+).

The protein resides in the cytoplasm. It catalyses the reaction L-threonine + NAD(+) = (2S)-2-amino-3-oxobutanoate + NADH + H(+). Its pathway is amino-acid degradation; L-threonine degradation via oxydo-reductase pathway; glycine from L-threonine: step 1/2. Its function is as follows. Catalyzes the NAD(+)-dependent oxidation of L-threonine to 2-amino-3-ketobutyrate. The sequence is that of L-threonine 3-dehydrogenase from Anaeromyxobacter dehalogenans (strain 2CP-C).